The following is a 60-amino-acid chain: Large ribosomal subunit protein uL30 (60 aa).

It belongs to the universal ribosomal protein uL30 family. Part of the 50S ribosomal subunit.

The polypeptide is Large ribosomal subunit protein uL30 (Dehalococcoides mccartyi (strain ATCC BAA-2100 / JCM 16839 / KCTC 5957 / BAV1)).